A 378-amino-acid polypeptide reads, in one-letter code: Alginate lyase (378 aa).

The signal sequence occupies residues Met-1 to Ala-28. Residues Ser-67–Lys-68, His-140–Thr-141, and Tyr-258 each bind substrate. Positions Leu-359 to Ser-378 are disordered. Positions Asp-364–Ser-378 are enriched in basic and acidic residues.

It belongs to the polysaccharide lyase 5 family.

Its subcellular location is the periplasm. The catalysed reaction is Eliminative cleavage of alginate to give oligosaccharides with 4-deoxy-alpha-L-erythro-hex-4-enuronosyl groups at their non-reducing ends and beta-D-mannuronate at their reducing end.. In terms of biological role, catalyzes the depolymerization of alginate by cleaving the beta-1,4 glycosidic bond between two adjacent sugar residues via a beta-elimination mechanism. May serve to degrade mislocalized alginate that is trapped in the periplasmic space. In Pseudomonas syringae pv. syringae (strain B728a), this protein is Alginate lyase.